The sequence spans 241 residues: Purine nucleoside phosphorylase DeoD-type 1 (241 aa).

His-5 is an a purine D-ribonucleoside binding site. Residues Gly-21, Arg-25, Arg-44, and 88 to 91 (RVGS) each bind phosphate. Residues 180–182 (EME) and 204–205 (SD) each bind a purine D-ribonucleoside. Catalysis depends on Asp-205, which acts as the Proton donor.

This sequence belongs to the PNP/UDP phosphorylase family. Homohexamer; trimer of homodimers.

It catalyses the reaction a purine D-ribonucleoside + phosphate = a purine nucleobase + alpha-D-ribose 1-phosphate. It carries out the reaction a purine 2'-deoxy-D-ribonucleoside + phosphate = a purine nucleobase + 2-deoxy-alpha-D-ribose 1-phosphate. Catalyzes the reversible phosphorolytic breakdown of the N-glycosidic bond in the beta-(deoxy)ribonucleoside molecules, with the formation of the corresponding free purine bases and pentose-1-phosphate. This is Purine nucleoside phosphorylase DeoD-type 1 from Vibrio cholerae serotype O1 (strain ATCC 39315 / El Tor Inaba N16961).